The sequence spans 156 residues: Small ribosomal subunit protein uS7 (156 aa).

Belongs to the universal ribosomal protein uS7 family. As to quaternary structure, part of the 30S ribosomal subunit. Contacts proteins S9 and S11.

One of the primary rRNA binding proteins, it binds directly to 16S rRNA where it nucleates assembly of the head domain of the 30S subunit. Is located at the subunit interface close to the decoding center, probably blocks exit of the E-site tRNA. This Aliivibrio fischeri (strain MJ11) (Vibrio fischeri) protein is Small ribosomal subunit protein uS7.